Consider the following 93-residue polypeptide: uncharacterized protein (93 aa).

3 helical membrane-spanning segments follow: residues Met-15–Val-35, Ile-48–Ile-68, and Leu-72–His-92.

Its subcellular location is the cell membrane. This is an uncharacterized protein from Bacillus subtilis (strain 168).